The primary structure comprises 450 residues: UDP-N-acetylmuramoylalanine--D-glutamate ligase (450 aa).

119–125 (GSNGKTT) serves as a coordination point for ATP.

It belongs to the MurCDEF family.

It is found in the cytoplasm. It catalyses the reaction UDP-N-acetyl-alpha-D-muramoyl-L-alanine + D-glutamate + ATP = UDP-N-acetyl-alpha-D-muramoyl-L-alanyl-D-glutamate + ADP + phosphate + H(+). It functions in the pathway cell wall biogenesis; peptidoglycan biosynthesis. Cell wall formation. Catalyzes the addition of glutamate to the nucleotide precursor UDP-N-acetylmuramoyl-L-alanine (UMA). The polypeptide is UDP-N-acetylmuramoylalanine--D-glutamate ligase (Bacillus cereus (strain AH187)).